Consider the following 348-residue polypeptide: Dihydroorotase (348 aa).

Zn(2+) is bound by residues His17 and His19. Substrate contacts are provided by residues 19 to 21 (HLR) and Asn45. Residues Lys103, His140, and His178 each coordinate Zn(2+). Lys103 is subject to N6-carboxylysine. His140 lines the substrate pocket. Leu223 provides a ligand contact to substrate. Position 251 (Asp251) interacts with Zn(2+). Residue Asp251 is part of the active site. Positions 255 and 267 each coordinate substrate.

The protein belongs to the metallo-dependent hydrolases superfamily. DHOase family. Class II DHOase subfamily. Homodimer. Requires Zn(2+) as cofactor.

It catalyses the reaction (S)-dihydroorotate + H2O = N-carbamoyl-L-aspartate + H(+). The protein operates within pyrimidine metabolism; UMP biosynthesis via de novo pathway; (S)-dihydroorotate from bicarbonate: step 3/3. Catalyzes the reversible cyclization of carbamoyl aspartate to dihydroorotate. The sequence is that of Dihydroorotase from Shigella boydii serotype 4 (strain Sb227).